Here is a 686-residue protein sequence, read N- to C-terminus: Cyclic nucleotide-gated channel alpha-1 (686 aa).

The Cytoplasmic portion of the chain corresponds to 1–165 (MKNNIINTQQ…PSGNTYYNWL (165 aa)). Disordered stretches follow at residues 31–75 (ENGA…PSQR) and 87–149 (NVNN…EEKK). Over residues 39–53 (SEDDDSASTSEESEN) the composition is skewed to acidic residues. Positions 110–124 (SKSDDKNENKNDPEK) are enriched in basic and acidic residues. A compositionally biased stretch (basic residues) spans 125–134 (KKKKKDKEKK). A compositionally biased stretch (basic and acidic residues) spans 135-149 (KKEEKSKDKKEEEKK). Residues 166 to 187 (FCITLPVMYNWTMVIARACFDE) traverse the membrane as a helical segment. The Extracellular portion of the chain corresponds to 188–197 (LQSDYLEYWL). A helical membrane pass occupies residues 198 to 218 (ILDYVSDIVYLIDMFVRTRTG). The Cytoplasmic portion of the chain corresponds to 219-243 (YLEQGLLVKEELKLINKYKSNLQFK). A helical transmembrane segment spans residues 244–262 (LDVLSLIPTDLLYFKLGWN). Residues 263 to 267 (YPEIR) are Extracellular-facing. The helical transmembrane segment at 268–286 (LNRLLRFSRMFEFFQRTET) threads the bilayer. Over 287-293 (RTNYPNI) the chain is Cytoplasmic. The tract at residues 291–399 (PNIFRISNLV…GNIGSMISNM (109 aa)) is ion conduction pathway. The chain crosses the membrane as a helical span at residues 294–317 (FRISNLVMYIVIIIHWNACVFYSI). The Extracellular portion of the chain corresponds to 318 to 340 (SKAIGFGNDTWVYPDINDPEFGR). The N-linked (GlcNAc...) asparagine glycan is linked to asparagine 325. 2 helical membrane passes run 341 to 375 (LARKYVYSLYWSTLTLTTIGETPPPVRDSEYVFVV) and 376 to 400 (VDFLIGVLIFATIVGNIGSMISNMN). The tract at residues 358-361 (TIGE) is selectivity filter. Residues 401-477 (AARAEFQARI…DTLKKVRIFA (77 aa)) form a C-linker region. Residues 401–686 (AARAEFQARI…GAESGPIDST (286 aa)) lie on the Cytoplasmic side of the membrane. The cyclic nucleotide-binding domain stretch occupies residues 481–601 (AGLLVELVLK…EEKGKQILMK (121 aa)). 3',5'-cyclic GMP is bound by residues glycine 541, serine 544, arginine 557, and threonine 558. The 3',5'-cyclic AMP site is built by arginine 557 and threonine 558. Residues 619–673 (LEEKVTRMEGSVDLLQTRFARILAEYESMQQKLKQRLTKVEKFLKPLIDTEFSSI) are a coiled coil.

The protein belongs to the cyclic nucleotide-gated cation channel (TC 1.A.1.5) family. CNGA1 subfamily. Forms heterotetrameric channels composed of CNGA1 and CNGB1 subunits with 3:1 stoichiometry. May also form cyclic nucleotide-activated homotetrameric channels, that are efficiently activated by saturating cGMP, but poorly activated by saturating cAMP compared to the heterotetramer with CNGB1. The channel binds Ca(2+)-bound CALM1 via CaM1 and CaM2 regions of the CNGB1 subunit; this interaction modulates the affinity of the channel for cNMPs in response to intracellular Ca(2+) levels. As to expression, rod cells in the retina.

Its subcellular location is the cell membrane. It catalyses the reaction Ca(2+)(in) = Ca(2+)(out). The catalysed reaction is Na(+)(in) = Na(+)(out). It carries out the reaction K(+)(in) = K(+)(out). The enzyme catalyses NH4(+)(in) = NH4(+)(out). It catalyses the reaction Rb(+)(in) = Rb(+)(out). The catalysed reaction is Li(+)(in) = Li(+)(out). It carries out the reaction Cs(+)(in) = Cs(+)(out). Channel opening is activated by cGMP and at a much lesser extent by cAMP. Ca(2+) binding concominantly blocks monovalent cation currents. Inhibited by L-cis-diltiazem. Pore-forming subunit of the rod cyclic nucleotide-gated channel. Mediates rod photoresponses at dim light converting transient changes in intracellular cGMP levels into electrical signals. In the dark, cGMP levels are high and keep the channel open enabling a steady inward current carried by Na(+) and Ca(2+) ions that leads to membrane depolarization and neurotransmitter release from synaptic terminals. Upon photon absorption cGMP levels decline leading to channel closure and membrane hyperpolarization that ultimately slows neurotransmitter release and signals the presence of light, the end point of the phototransduction cascade. Conducts cGMP- and cAMP-gated ion currents, with permeability for monovalent and divalent cations. The selectivity for Ca(2+) over Na(+) increases with cGMP concentrations, whereas the selectivity among monovalent ions is independent of the cGMP levels. The polypeptide is Cyclic nucleotide-gated channel alpha-1 (Homo sapiens (Human)).